The sequence spans 127 residues: Fluoride-specific ion channel FluC (127 aa).

The next 4 helical transmembrane spans lie at 4–24 (SLLAIGLGAMVGAWLRWGLGM), 35–55 (PGTLLANLIGGYIIGLAIAFF), 68–88 (LLITGFCGGLTTFSTFSAEVV), and 96–116 (ILWALGSIALHVSGSLLMTAA). The Na(+) site is built by glycine 75 and threonine 78.

The protein belongs to the fluoride channel Fluc/FEX (TC 1.A.43) family.

The protein resides in the cell inner membrane. It catalyses the reaction fluoride(in) = fluoride(out). Na(+) is not transported, but it plays an essential structural role and its presence is essential for fluoride channel function. In terms of biological role, fluoride-specific ion channel. Important for reducing fluoride concentration in the cell, thus reducing its toxicity. The chain is Fluoride-specific ion channel FluC from Pseudomonas putida (strain W619).